Reading from the N-terminus, the 101-residue chain is NADH-quinone oxidoreductase subunit K (101 aa).

Transmembrane regions (helical) follow at residues 4–24, 29–49, and 61–81; these read VYDY…GIML, IILL…NFIA, and VFVF…LAIV.

The protein belongs to the complex I subunit 4L family. NDH-1 is composed of 14 different subunits. Subunits NuoA, H, J, K, L, M, N constitute the membrane sector of the complex.

It is found in the cell inner membrane. The catalysed reaction is a quinone + NADH + 5 H(+)(in) = a quinol + NAD(+) + 4 H(+)(out). Its function is as follows. NDH-1 shuttles electrons from NADH, via FMN and iron-sulfur (Fe-S) centers, to quinones in the respiratory chain. The immediate electron acceptor for the enzyme in this species is believed to be ubiquinone. Couples the redox reaction to proton translocation (for every two electrons transferred, four hydrogen ions are translocated across the cytoplasmic membrane), and thus conserves the redox energy in a proton gradient. This chain is NADH-quinone oxidoreductase subunit K, found in Legionella pneumophila (strain Paris).